The chain runs to 468 residues: Methionine aminopeptidase 2 (468 aa).

Over residues 1-10 (MGSKTFEGEG) the composition is skewed to basic and acidic residues. Positions 1–106 (MGSKTFEGEG…PPRVPLDDLF (106 aa)) are disordered. Residues 16–25 (DPSNSTSPNS) show a composition bias toward polar residues. Basic and acidic residues predominate over residues 31 to 40 (RGAHLSRDGD). A compositionally biased stretch (acidic residues) spans 46–56 (GDGDDGADGDE). The segment covering 61-75 (VTTTPLTEQQPSSET) has biased composition (polar residues). The segment covering 78-90 (KKKKRRKPKKKIS) has biased composition (basic residues). H219 is a binding site for substrate. D240, D251, and H320 together coordinate a divalent metal cation. Residue H328 participates in substrate binding. Residues E353 and E449 each coordinate a divalent metal cation.

Belongs to the peptidase M24A family. Methionine aminopeptidase eukaryotic type 2 subfamily. The cofactor is Co(2+). It depends on Zn(2+) as a cofactor. Mn(2+) is required as a cofactor. Requires Fe(2+) as cofactor.

It is found in the cytoplasm. It carries out the reaction Release of N-terminal amino acids, preferentially methionine, from peptides and arylamides.. Functionally, cotranslationally removes the N-terminal methionine from nascent proteins. The N-terminal methionine is often cleaved when the second residue in the primary sequence is small and uncharged (Met-Ala-, Cys, Gly, Pro, Ser, Thr, or Val). The sequence is that of Methionine aminopeptidase 2 from Aspergillus oryzae (strain ATCC 42149 / RIB 40) (Yellow koji mold).